The following is a 638-amino-acid chain: Factor of DNA methylation 3 (638 aa).

A coiled-coil region spans residues 318 to 497 (FNRIFADHEK…RALISNLRDM (180 aa)).

Functionally, acts in association with FDM4 and FDM5 for RNA-directed DNA methylation (RdDM). This is Factor of DNA methylation 3 from Arabidopsis thaliana (Mouse-ear cress).